The sequence spans 254 residues: Imidazole glycerol phosphate synthase subunit HisF (254 aa).

Active-site residues include D11 and D130.

Belongs to the HisA/HisF family. In terms of assembly, heterodimer of HisH and HisF.

Its subcellular location is the cytoplasm. It catalyses the reaction 5-[(5-phospho-1-deoxy-D-ribulos-1-ylimino)methylamino]-1-(5-phospho-beta-D-ribosyl)imidazole-4-carboxamide + L-glutamine = D-erythro-1-(imidazol-4-yl)glycerol 3-phosphate + 5-amino-1-(5-phospho-beta-D-ribosyl)imidazole-4-carboxamide + L-glutamate + H(+). Its pathway is amino-acid biosynthesis; L-histidine biosynthesis; L-histidine from 5-phospho-alpha-D-ribose 1-diphosphate: step 5/9. In terms of biological role, IGPS catalyzes the conversion of PRFAR and glutamine to IGP, AICAR and glutamate. The HisF subunit catalyzes the cyclization activity that produces IGP and AICAR from PRFAR using the ammonia provided by the HisH subunit. This Gloeobacter violaceus (strain ATCC 29082 / PCC 7421) protein is Imidazole glycerol phosphate synthase subunit HisF.